Consider the following 476-residue polypeptide: Cysteine--tRNA ligase (476 aa).

Residue cysteine 27 coordinates Zn(2+). Positions 29-39 match the 'HIGH' region motif; it reads ITPYDSVHVGH. Zn(2+)-binding residues include cysteine 213, histidine 238, and glutamate 242. The 'KMSKS' region motif lies at 271–275; it reads KMSKS. Lysine 274 lines the ATP pocket.

This sequence belongs to the class-I aminoacyl-tRNA synthetase family. Zn(2+) serves as cofactor.

Its subcellular location is the cytoplasm. It carries out the reaction tRNA(Cys) + L-cysteine + ATP = L-cysteinyl-tRNA(Cys) + AMP + diphosphate. The chain is Cysteine--tRNA ligase from Pyrobaculum arsenaticum (strain DSM 13514 / JCM 11321 / PZ6).